Consider the following 361-residue polypeptide: MKDSIKAKLQSLIERHEEVSALLGEANVISDQNKFRDLSKEYSHLEPIVMAFKEYTQALEDKEAAYEMLNEKDAELVEMAKEELKSANESIERLEDELQILLLPRDPNDDANIFLEIRAGTGGDEASIFSGDLFKMYSKYAEQRGWKIEVVSASEGEHGGYKEIISRIYGDGVYSQLKFESGAHRVQRVPATESQGRIHTSACTVAVMPEADEVEGIDINPADIKVDTFRASGAGGQHVNKTDSAIRITHIPTGVVVECQDQRSQHKNRAAAMSMLKSKLLQAEIDKQQKEQSDTRKNLVGSGDRSERIRTYNYPQGRVTDHRINLTLYKLDEVMEGSLDSIIQPLILEHQADLLATMSDE.

Q237 carries the N5-methylglutamine modification. Positions 287 to 297 (KQQKEQSDTRK) are enriched in basic and acidic residues. The segment at 287–307 (KQQKEQSDTRKNLVGSGDRSE) is disordered.

Belongs to the prokaryotic/mitochondrial release factor family. Methylated by PrmC. Methylation increases the termination efficiency of RF1.

It is found in the cytoplasm. Peptide chain release factor 1 directs the termination of translation in response to the peptide chain termination codons UAG and UAA. The sequence is that of Peptide chain release factor 1 from Francisella philomiragia subsp. philomiragia (strain ATCC 25017 / CCUG 19701 / FSC 153 / O#319-036).